Reading from the N-terminus, the 135-residue chain is Probable transporter PD_1892 (135 aa).

A run of 4 helical transmembrane segments spans residues 4-24 (YWYP…LLLL), 45-65 (AQNI…TVIF), 71-91 (VTVA…GLGT), and 114-134 (IVAT…MGVY).

Belongs to the TsuA/YedE (TC 9.B.102) family.

The protein resides in the cell inner membrane. The polypeptide is Probable transporter PD_1892 (Xylella fastidiosa (strain Temecula1 / ATCC 700964)).